A 125-amino-acid polypeptide reads, in one-letter code: C-X-C motif chemokine 9 (125 aa).

The N-terminal stretch at methionine 1–glycine 22 is a signal peptide. Disulfide bonds link cysteine 31–cysteine 58 and cysteine 33–cysteine 74. The disordered stretch occupies residues valine 93–threonine 125. The span at serine 94 to threonine 125 shows a compositional bias: basic residues.

The protein belongs to the intercrine alpha (chemokine CxC) family.

It localises to the secreted. Functionally, cytokine that affects the growth, movement, or activation state of cells that participate in immune and inflammatory response. Chemotactic for activated T-cells. Binds to CXCR3. The polypeptide is C-X-C motif chemokine 9 (CXCL9) (Homo sapiens (Human)).